A 307-amino-acid polypeptide reads, in one-letter code: Nucleotide-binding protein Acid345_3782 (307 aa).

31–38 (GLSGSGKA) serves as a coordination point for ATP. 81 to 84 (DIRE) contributes to the GTP binding site.

The protein belongs to the RapZ-like family.

In terms of biological role, displays ATPase and GTPase activities. The chain is Nucleotide-binding protein Acid345_3782 from Koribacter versatilis (strain Ellin345).